The primary structure comprises 345 residues: Alanine racemase (345 aa).

The active-site Proton acceptor; specific for D-alanine is Lys-33. Lys-33 carries the post-translational modification N6-(pyridoxal phosphate)lysine. Arg-128 serves as a coordination point for substrate. Residue Tyr-242 is the Proton acceptor; specific for L-alanine of the active site. Met-291 serves as a coordination point for substrate.

It belongs to the alanine racemase family. Pyridoxal 5'-phosphate is required as a cofactor.

It carries out the reaction L-alanine = D-alanine. Its pathway is amino-acid biosynthesis; D-alanine biosynthesis; D-alanine from L-alanine: step 1/1. In terms of biological role, catalyzes the interconversion of L-alanine and D-alanine. May also act on other amino acids. This chain is Alanine racemase (alr), found in Ruegeria sp. (strain TM1040) (Silicibacter sp.).